A 707-amino-acid polypeptide reads, in one-letter code: Elongation factor G (707 aa).

The tr-type G domain maps to 9 to 293 (HDVRNIGIMA…GVVDYLPSPE (285 aa)). Residues 18 to 25 (AHIDAGKT), 90 to 94 (DTPGH), and 144 to 147 (NKMD) each bind GTP.

It belongs to the TRAFAC class translation factor GTPase superfamily. Classic translation factor GTPase family. EF-G/EF-2 subfamily.

The protein localises to the cytoplasm. Catalyzes the GTP-dependent ribosomal translocation step during translation elongation. During this step, the ribosome changes from the pre-translocational (PRE) to the post-translocational (POST) state as the newly formed A-site-bound peptidyl-tRNA and P-site-bound deacylated tRNA move to the P and E sites, respectively. Catalyzes the coordinated movement of the two tRNA molecules, the mRNA and conformational changes in the ribosome. The polypeptide is Elongation factor G (Bifidobacterium longum (strain DJO10A)).